The following is a 428-amino-acid chain: E3 ubiquitin-protein ligase RNF128 (428 aa).

An N-terminal signal peptide occupies residues 1–38 (MGPPPGAGVSCRGGCGFSRLLAWCFLLALSPQAPGSRG). Residues Asn48, Asn59, and Asn101 are each glycosylated (N-linked (GlcNAc...) asparagine). Residues 75-183 (SPLEPVAGVL…LKGTKILQSI (109 aa)) enclose the PA domain. The chain crosses the membrane as a helical span at residues 208–228 (IFFVSVSFFIITAATVGYFIF). The RING-type; atypical zinc finger occupies 277–318 (CAVCIELYKPNDLVRILTCNHIFHKTCVDPWLLEHRTCPMCK). The disordered stretch occupies residues 346 to 428 (ISNSASSHEE…QETAVREIKS (83 aa)). Positions 360–371 (ETASSGYASVQG) are enriched in polar residues.

Post-translationally, auto-ubiquitinated. Controls the development of T-cell clonal anergy by ubiquitination.

It localises to the cytoplasm. The protein localises to the endomembrane system. The protein resides in the cytoskeleton. Its subcellular location is the perinuclear region. The enzyme catalyses S-ubiquitinyl-[E2 ubiquitin-conjugating enzyme]-L-cysteine + [acceptor protein]-L-lysine = [E2 ubiquitin-conjugating enzyme]-L-cysteine + N(6)-ubiquitinyl-[acceptor protein]-L-lysine.. The protein operates within protein modification; protein ubiquitination. Its function is as follows. E3 ubiquitin-protein ligase that catalyzes 'Lys-27', 'Lys-48'- or 'Lys-63'-linked polyubiquitin chains formation and plays a role in different biological processes such as modulation of immune response, cytoskeletal dynamics or protein homeostasis. Inhibits IL2 and IL4 transcription, thereby playing an important role in the induction of the anergic phenotype, a long-term stable state of T-lymphocyte unresponsiveness to antigenic stimulation associated with the blockade of interleukin production. Ubiquitinates ARPC5 with 'Lys-48' linkages and COR1A with 'Lys-63' linkages leading to their degradation, down-regulation of these cytoskeletal components results in impaired lamellipodium formation and reduced accumulation of F-actin at the immunological synapse. Functions in the patterning of the dorsal ectoderm; sensitizes ectoderm to respond to neural-inducing signals. Plays a positive role in innate immune response by promoting 'Lys-63'-linked ubiquitination of TBK1 after RNA- or DNA-virus infection. Regulates alveolar macrophage activation and neutrophil infiltration by interacting with TLR4, targeting it for degradation, and inhibiting NF-kappa-B activation, hence decreasing pro-inflammatory cytokines. Negatively regulates the IL-3/STAT5 signaling pathway by facilitating 'Lys-27'-linked polyubiquitination of IL3RA leading to its degradation via lysosomal pathway. Directly regulates the N-glycosylation process in the endoplasmic reticulum by targeting the glycosyl-transferase RPN1 for ubiquitination and degradation. Other substrates targeted for degradation by RNF128 include transmembrane proteins CD40L, CD83 or the tetraspanin CD151. The chain is E3 ubiquitin-protein ligase RNF128 (RNF128) from Homo sapiens (Human).